The primary structure comprises 468 residues: Neurexin-1-beta (468 aa).

A signal peptide spans 1–46 (MYQRMLRCGAELGSPGGGSSGGAGGRLALLWIVPLTLSGLLGVAWG). Residues 47-391 (ASSLGAHHIH…AEVIRESSST (345 aa)) lie on the Extracellular side of the membrane. The Laminin G-like domain maps to 87–285 (YIFSKGGGQI…DANIAIVGNV (199 aa)). Ca(2+) contacts are provided by D137 and V154. N-linked (GlcNAc...) asparagine glycosylation is present at N184. Residues 201 to 230 (GNNDNERLAIARQRIPYRLGRVVDEWLLDK) form an essential for interaction with CBLN1; modulates interaction affinity with NLGN1, NLGN2 and NLGN3; prevents interaction with DAG1/alpha-dystroglycan; modulates interaction with alpha-latrotoxin region. The Ca(2+) site is built by I236 and N238. O-linked (Xyl...) (heparan sulfate) serine glycosylation occurs at S346. The segment at 350-381 (PSDDEDIDPCEPSSGGLANPTRVGGREPYPGS) is disordered. A helical membrane pass occupies residues 392 to 414 (TGMVVGIVAAAALCILILLYAMY). Topologically, residues 415-468 (KYRNRDEGSYHVDESRNYISNSAQSNGAVVKEKQPSSAKSANKNKKNKDKEYYV) are cytoplasmic. Residues 435 to 468 (NSAQSNGAVVKEKQPSSAKSANKNKKNKDKEYYV) form a disordered region. Residues S450, S451, and S454 each carry the phosphoserine modification.

The protein belongs to the neurexin family. In terms of assembly, the cytoplasmic C-terminal region binds to CASK. Binds NLGN1, NLGN2 and NLGN3, DAG1 (alpha-dystroglycan) and alpha-latrotoxin. Binding to neuroligins is calcium-dependent, and the binding preference ranks as follow: NLGN1 &gt; NLGN4 &gt;&gt; NLGN3 &gt; NLGN2. Interacts with CBLN2 and more weakly with CBLN4. Interacts with CBLN1; interaction is CBLN1 hexamer form-dependent; CBLN1-binding is calcium-independent; isoform 1b does not interact with CBLN1. Interacts with CLSTN3. N-glycosylated. In terms of processing, O-glycosylated; contains heparan sulfate. Heparan sulfate attachment is required for synapse development by mediating interactions with neuroligins. Brain.

It is found in the presynaptic cell membrane. Neuronal cell surface protein involved in cell recognition and cell adhesion by forming intracellular junctions through binding to neuroligins. Plays a role in formation of synaptic junctions. Functions as part of a trans-synaptic complex by binding to cerebellins and postsynaptic GRID1. This interaction helps regulate the activity of NMDA and AMPA receptors at hippocampal synapses without affecting synapse formation. NRXN1B-CBLN2-GRID1 complex transduce presynaptic signals into postsynaptic NMDAR response. The chain is Neurexin-1-beta from Rattus norvegicus (Rat).